The sequence spans 110 residues: Large ribosomal subunit protein uL22 (110 aa).

It belongs to the universal ribosomal protein uL22 family. Part of the 50S ribosomal subunit.

This protein binds specifically to 23S rRNA; its binding is stimulated by other ribosomal proteins, e.g. L4, L17, and L20. It is important during the early stages of 50S assembly. It makes multiple contacts with different domains of the 23S rRNA in the assembled 50S subunit and ribosome. Functionally, the globular domain of the protein is located near the polypeptide exit tunnel on the outside of the subunit, while an extended beta-hairpin is found that lines the wall of the exit tunnel in the center of the 70S ribosome. This chain is Large ribosomal subunit protein uL22, found in Histophilus somni (strain 129Pt) (Haemophilus somnus).